The sequence spans 760 residues: Xaa-Pro dipeptidyl-peptidase (760 aa).

Active-site charge relay system residues include Ser-349, Asp-469, and His-499.

The protein belongs to the peptidase S15 family. As to quaternary structure, homodimer.

It is found in the cytoplasm. It carries out the reaction Hydrolyzes Xaa-Pro-|- bonds to release unblocked, N-terminal dipeptides from substrates including Ala-Pro-|-p-nitroanilide and (sequentially) Tyr-Pro-|-Phe-Pro-|-Gly-Pro-|-Ile.. Its function is as follows. Removes N-terminal dipeptides sequentially from polypeptides having unsubstituted N-termini provided that the penultimate residue is proline. In Streptococcus pyogenes serotype M4 (strain MGAS10750), this protein is Xaa-Pro dipeptidyl-peptidase.